Consider the following 263-residue polypeptide: Orotidine 5'-phosphate decarboxylase (263 aa).

Substrate contacts are provided by residues Asp38, 60–62 (KTH), 91–100 (DRKFADIGNT), Tyr213, and Arg232. The active-site Proton donor is Lys93.

The protein belongs to the OMP decarboxylase family.

It catalyses the reaction orotidine 5'-phosphate + H(+) = UMP + CO2. The protein operates within pyrimidine metabolism; UMP biosynthesis via de novo pathway; UMP from orotate: step 2/2. This is Orotidine 5'-phosphate decarboxylase (PYR4) from Rhizomucor pusillus.